The sequence spans 299 residues: Protease HtpX homolog (299 aa).

2 helical membrane-spanning segments follow: residues isoleucine 15 to phenylalanine 35 and glycine 39 to phenylalanine 59. Histidine 143 contributes to the Zn(2+) binding site. Glutamate 144 is an active-site residue. A Zn(2+)-binding site is contributed by histidine 147. Transmembrane regions (helical) follow at residues isoleucine 158 to tryptophan 178 and isoleucine 198 to valine 218. Glutamate 227 serves as a coordination point for Zn(2+).

Belongs to the peptidase M48B family. Zn(2+) serves as cofactor.

It localises to the cell membrane. The polypeptide is Protease HtpX homolog (Streptococcus pneumoniae (strain Hungary19A-6)).